The following is a 231-amino-acid chain: uncharacterized protein (231 aa).

Helical transmembrane passes span 6–26 (IKLI…YKYI), 39–59 (NIVS…STFS), and 66–86 (FCFQ…GYAF).

It is found in the cell membrane. This is an uncharacterized protein from Rickettsia prowazekii (strain Madrid E).